The sequence spans 46 residues: Probable butyrate kinase (46 aa).

It belongs to the acetokinase family.

Its subcellular location is the cytoplasm. The catalysed reaction is butanoate + ATP = butanoyl phosphate + ADP. This is Probable butyrate kinase (buk) from Geobacillus stearothermophilus (Bacillus stearothermophilus).